The primary structure comprises 601 residues: MDNKQSRTRNFSIIAHIDHGKSTLADRLIQQTGLVSERDMKSQLLDNMDLERERGITIKLQNIRLMYKAKDGNEYYLNLIDTPGHVDFNYEVSRSLAACEGALLVVDAAQGVEAQTLANVYLAIDQDLEILPIINKIDLPSARPEEVKNEIEDLIGLDSSEAPLISAKTGLNIEDVLEDIVKNVPPPKGDNEAPLKALIFDSYYDAYKGVVAYVRVFEGTVKKGMTIKMMNTNKKFEVTEVGVMAPGQTELSELSAGDVGYIAASIKDIRSCRVGDTITDSNNPTEEPLPGYKKATPMVYCGIYPGEGEKYENVRDALEKLQVNDAALEYEAETSAALGFGFRCGFLGLLHMEIMQERLEREFNLDIITTAPSVIYRVTKMDGEVVMIQNPANLPEPSEIKMIEEPIVKGDIIVPKDYVGVVMELCQERRGNMLNMEYIDERRVMLHYDLPLNEVVYDFFDALKSRTRGYGSLDYEVKGYVASTLVKLDILINKEQVDALSFIVHETRAFPRGKAMCEKLKGEIPRHQFAIPIQAAVGNKVIARETISALRKDVLAKCYGGDISRKKKLLEKQKEGKKRMRQIGSVEVPQKAFMSVLKLDE.

A tr-type G domain is found at 6-188 (SRTRNFSIIA…DIVKNVPPPK (183 aa)). Residues 18 to 23 (DHGKST) and 135 to 138 (NKID) contribute to the GTP site.

Belongs to the TRAFAC class translation factor GTPase superfamily. Classic translation factor GTPase family. LepA subfamily.

It localises to the cell membrane. The catalysed reaction is GTP + H2O = GDP + phosphate + H(+). Required for accurate and efficient protein synthesis under certain stress conditions. May act as a fidelity factor of the translation reaction, by catalyzing a one-codon backward translocation of tRNAs on improperly translocated ribosomes. Back-translocation proceeds from a post-translocation (POST) complex to a pre-translocation (PRE) complex, thus giving elongation factor G a second chance to translocate the tRNAs correctly. Binds to ribosomes in a GTP-dependent manner. This Clostridioides difficile (strain 630) (Peptoclostridium difficile) protein is Elongation factor 4.